A 124-amino-acid chain; its full sequence is FK506-binding protein 1 (124 aa).

The PPIase FKBP-type domain maps to 23–122 (GDTVTIHYDG…VFEVELLGVN (100 aa)).

It belongs to the FKBP-type PPIase family. FKBP1 subfamily.

The protein localises to the cytoplasm. It catalyses the reaction [protein]-peptidylproline (omega=180) = [protein]-peptidylproline (omega=0). With respect to regulation, inhibited by rapamycin. Functionally, PPIases accelerate the folding of proteins. It catalyzes the cis-trans isomerization of proline imidic peptide bonds in oligopeptides. The chain is FK506-binding protein 1 (RBP1) from Candida albicans (strain SC5314 / ATCC MYA-2876) (Yeast).